A 343-amino-acid polypeptide reads, in one-letter code: Heat-inducible transcription repressor HrcA (343 aa).

It belongs to the HrcA family.

Functionally, negative regulator of class I heat shock genes (grpE-dnaK-dnaJ and groELS operons). Prevents heat-shock induction of these operons. The polypeptide is Heat-inducible transcription repressor HrcA (Halalkalibacterium halodurans (strain ATCC BAA-125 / DSM 18197 / FERM 7344 / JCM 9153 / C-125) (Bacillus halodurans)).